The primary structure comprises 606 residues: Anthranilate synthase alpha subunit 2, chloroplastic (606 aa).

The N-terminal 49 residues, 1-49 (MESIAAATFTPSRLAARPATPAAAAAPVRARAAVAAGGRRRTSRRGGVR), are a transit peptide targeting the chloroplast.

This sequence belongs to the anthranilate synthase component I family. In terms of assembly, heterotetramer consisting of two non-identical subunits: a beta subunit and a large alpha subunit.

It is found in the plastid. The protein resides in the chloroplast. It catalyses the reaction chorismate + L-glutamine = anthranilate + pyruvate + L-glutamate + H(+). Its pathway is amino-acid biosynthesis; L-tryptophan biosynthesis; L-tryptophan from chorismate: step 1/5. Its activity is regulated as follows. Feedback inhibition by tryptophan. In terms of biological role, part of a heterotetrameric complex that catalyzes the two-step biosynthesis of anthranilate, an intermediate in the biosynthesis of L-tryptophan. In the first step, the glutamine-binding beta subunit of anthranilate synthase (AS) provides the glutamine amidotransferase activity which generates ammonia as a substrate that, along with chorismate, is used in the second step, catalyzed by the large alpha subunit of AS to produce anthranilate. This is Anthranilate synthase alpha subunit 2, chloroplastic from Oryza sativa subsp. japonica (Rice).